Consider the following 850-residue polypeptide: MAVTSHHMVPVFVLMSACLATAGPEPSTRCELSPISASHPVQALMESFTVLSGCASRGTTGLPREVHILNLRSTDQGLGQPQREVTLHLNPIASVHTHHKPVVFLLNSPQPLVWHVKTERLAAGVPRLFLVSEGSVVQFSSGNFSLTAETEERSFPQENEHLLHWAQKEYGAVTSFTELKIARNIYIKVGEDQVFPPTCNIGKNFLSLNYLAEYLQPKAAEGCVLASQPHEKEVHIIELISPNSNPYSTFQVDIIIDIRPAREDPEVVKNLVLILKCKKSVNWVIKSFDVKGNLKVIAPDSIGFGKESERSMTVTKLVRNDYPSTQENLMKWALDNGYSPVTSYTIAPVANRFHLRLENNEEMRDEEVHTIPPELRILLGPDHLPALDSPPFQGEIPNGGFPFPFPDIPRRGWKEGEDRIPRPKEPIIPRVQLLPDHREPEEVQGGVNIALSVKCDNEKMVVAVDKDSFQTNGYSGMELTLLDPSCKAKMNGTHFVLESPLNGCGTRHRRSAPDGVVYYNSIVVQAPSPGDSSGWPDGYEDLESGDNGFPGDTDEGETAPLSRAGVVVFNCSLRQLRSPSGFQDQLDGNATFNMELYNTDLFLVPSPGVFSVAENEHVYVEVSVTKADQDLGFAIQTCFISPYSNPDRMSDYTIIENICPKDDSVKFYSSKRVHFPIPHAEVDKKRFSFVFKSVFNTSLLFLHCELTLCSRNKGSQKLPKCVTPDDACTSLDATMIWTMMQNKKTFTKPLAVVLQVDYKENVPNMKESSPVPPPPQIFHGLDTLTVMGIAFAAFVIGALLTGALWYIYSHTGETARRQQVPTSPPASENSSAAHSIGSTQSTPCSSSSTA.

The N-terminal stretch at Met1–Ala22 is a signal peptide. Residues Gly23–Thr785 lie on the Extracellular side of the membrane. An intrachain disulfide couples Cys54 to Cys199. Asn143 and Asn491 each carry an N-linked (GlcNAc...) asparagine glycan. The ZP domain occupies Lys454–Cys728. The disordered stretch occupies residues Ser528–Glu557. 2 O-linked (Xyl...) (glycosaminoglycan) serine glycosylation sites follow: Ser533 and Ser544. Residues Asn570, Asn589, and Asn696 are each glycosylated (N-linked (GlcNAc...) asparagine). 3 disulfide bridges follow: Cys638-Cys704, Cys659-Cys728, and Cys709-Cys721. The interval Met735–Pro749 is interaction with TGF-beta ligand. The helical transmembrane segment at Val786–Tyr808 threads the bilayer. The Cytoplasmic portion of the chain corresponds to Ser809–Ala850. The segment covering Arg817–Ala833 has biased composition (polar residues). The segment at Arg817–Ala850 is disordered. The segment covering Ser835–Ala850 has biased composition (low complexity). Phosphothreonine is present on Thr839.

In terms of assembly, forms homodimers and homooligomers. Interacts with DYNLT4. Interacts with integrin ITGA5:ITGB1; this interaction promotes the internalization and trafficking of ITGA5:ITGB1 into endocytic vesicles. Interacts with TGFB1, BMP2, BMP5, BMP7 or GDF5 and inhibin A via the ligand binding domains. Interacts with ALK3/BMPR1A; this interaction results in the cell surface retention of BMPR1A. Interacts with ALK6/BMPR1B; this interaction enhances BMPR1B-mediated stimulation of the BMP signaling pathway. Interacts with the scaffolding protein beta-arrestin2/ARRB2; this interaction mediates internalization of TGFBR3 and thus regulates migration, actin cytoskeleton and activation of CDC42. In terms of processing, extensively modified by glycosaminoglycan groups (GAG). Post-translationally, phosphorylated in the cytoplasmic domain by the type II receptor TGFBR2 at THR-839 to mediate recruitment of ARRB2 and subsequent internalization of TGFBR2 and TGFBR3.

The protein localises to the cell membrane. Its subcellular location is the secreted. It localises to the extracellular space. The protein resides in the extracellular matrix. Its function is as follows. Cell surface receptor that regulates diverse cellular processes including cell proliferation, differentiation, migration, and apoptosis. Initiates BMP, inhibin, and TGF-beta signaling pathways by interacting with different ligands including TGFB1, BMP2, BMP5, BMP7 or GDF5. Alternatively, acts as a cell surface coreceptor for BMP ligands, serving to enhance ligand binding by differentially regulating BMPR1A/ALK3 and BMPR1B/ALK6 receptor trafficking. Promotes epithelial cell adhesion, focal adhesion formation and integrin signaling during epithelial cell spreading on fibronectin. By interacting with the scaffolding protein beta-arrestin2/ARRB2, regulates migration or actin cytoskeleton and promotes the activation of CDC42 as well as the inhibition of NF-kappa-B. In gonadotrope cells, acts as an inhibin A coreceptor and regulates follicle-stimulating hormone (FSH) levels and female fertility. Plays a role in the inhibition of directed and random cell migration in epithelial cells by altering the actin cytoskeletal organization. Participates in epithelial-mesenchymal transformation (EMT) upon binding to BMP2 or TGFB2, by activating the PAR6/SMURF1/RHOA pathway. The chain is Transforming growth factor beta receptor type 3 (Tgfbr3) from Mus musculus (Mouse).